The following is a 225-amino-acid chain: 2-C-methyl-D-erythritol 4-phosphate cytidylyltransferase (225 aa).

It belongs to the IspD/TarI cytidylyltransferase family. IspD subfamily.

It catalyses the reaction 2-C-methyl-D-erythritol 4-phosphate + CTP + H(+) = 4-CDP-2-C-methyl-D-erythritol + diphosphate. The protein operates within isoprenoid biosynthesis; isopentenyl diphosphate biosynthesis via DXP pathway; isopentenyl diphosphate from 1-deoxy-D-xylulose 5-phosphate: step 2/6. Functionally, catalyzes the formation of 4-diphosphocytidyl-2-C-methyl-D-erythritol from CTP and 2-C-methyl-D-erythritol 4-phosphate (MEP). In Cereibacter sphaeroides (strain KD131 / KCTC 12085) (Rhodobacter sphaeroides), this protein is 2-C-methyl-D-erythritol 4-phosphate cytidylyltransferase.